We begin with the raw amino-acid sequence, 142 residues long: Large ribosomal subunit protein uL11 (142 aa).

It belongs to the universal ribosomal protein uL11 family. Part of the ribosomal stalk of the 50S ribosomal subunit. Interacts with L10 and the large rRNA to form the base of the stalk. L10 forms an elongated spine to which L12 dimers bind in a sequential fashion forming a multimeric L10(L12)X complex. One or more lysine residues are methylated.

In terms of biological role, forms part of the ribosomal stalk which helps the ribosome interact with GTP-bound translation factors. The protein is Large ribosomal subunit protein uL11 of Tolumonas auensis (strain DSM 9187 / NBRC 110442 / TA 4).